Consider the following 162-residue polypeptide: Sorting nexin-3 (162 aa).

N-acetylalanine is present on alanine 2. The region spanning 27 to 151 (NFLEIDVSNP…HMFLQDEIID (125 aa)) is the PX domain. Arginine 43 is subject to Omega-N-methylarginine. Residues arginine 70, serine 72, lysine 95, and arginine 118 each contribute to the a 1,2-diacyl-sn-glycero-3-phospho-(1D-myo-inositol-3-phosphate) site. Serine 72 is subject to Phosphoserine. Residue lysine 95 forms a Glycyl lysine isopeptide (Lys-Gly) (interchain with G-Cter in SUMO2) linkage. The binds predominantly to PtdIns(P5) and weaker to PtdIns(P3) abd PtdIns(P4); involved in neurite outgrowth regulation stretch occupies residues 147-162 (DEIIDKSYTPSKIRHA).

This sequence belongs to the sorting nexin family. Interacts with VPS26A, VPS29 and VPS35; the interaction with VPS35 is direct. The association with the retromer CSC subcomplex subunits is proposed to represent a functional distinct retromer variant described as SNX3-retromer complex. Interacts with USP10 and SCNN1A. Interacts with TRFC. Interacts with SNX8; 2 molecules of SNX8 seems to associate with one molecule of SNX3. Interacts with PTPRU. Interacts with MON2 and DOP1B. Post-translationally, ubiquitinated, leading to its proteasomal degradation. Deubiquitinated by USP10.

It localises to the early endosome. Its subcellular location is the cytoplasmic vesicle. The protein resides in the phagosome. Phosphoinositide-binding protein required for multivesicular body formation. Specifically binds phosphatidylinositol 3-phosphate (PtdIns(P3)). Can also bind phosphatidylinositol 4-phosphate (PtdIns(P4)), phosphatidylinositol 5-phosphate (PtdIns(P5)) and phosphatidylinositol 3,5-biphosphate (PtdIns(3,5)P2). Plays a role in protein transport between cellular compartments. Together with RAB7A facilitates endosome membrane association of the retromer cargo-selective subcomplex (CSC/VPS). May in part act as component of the SNX3-retromer complex which mediates the retrograde endosome-to-TGN transport of WLS distinct from the SNX-BAR retromer pathway. Promotes stability and cell surface expression of epithelial sodium channel (ENAC) subunits SCNN1A and SCNN1G. Not involved in EGFR degradation. Involved in the regulation of phagocytosis in dendritic cells possibly by regulating EEA1 recruitment to the nascent phagosomes. Involved in iron homeostasis through regulation of endocytic recycling of the transferrin receptor TFRC presumably by delivering the transferrin:transferrin receptor complex to recycling endosomes; the function may involve the CSC retromer subcomplex. In the case of Salmonella enterica infection plays arole in maturation of the Salmonella-containing vacuole (SCV) and promotes recruitment of LAMP1 to SCVs. In Homo sapiens (Human), this protein is Sorting nexin-3.